Consider the following 556-residue polypeptide: 2-succinyl-5-enolpyruvyl-6-hydroxy-3-cyclohexene-1-carboxylate synthase (556 aa).

It belongs to the TPP enzyme family. MenD subfamily. As to quaternary structure, homodimer. It depends on Mg(2+) as a cofactor. Mn(2+) is required as a cofactor. Requires thiamine diphosphate as cofactor.

It carries out the reaction isochorismate + 2-oxoglutarate + H(+) = 5-enolpyruvoyl-6-hydroxy-2-succinyl-cyclohex-3-ene-1-carboxylate + CO2. Its pathway is quinol/quinone metabolism; 1,4-dihydroxy-2-naphthoate biosynthesis; 1,4-dihydroxy-2-naphthoate from chorismate: step 2/7. It participates in quinol/quinone metabolism; menaquinone biosynthesis. In terms of biological role, catalyzes the thiamine diphosphate-dependent decarboxylation of 2-oxoglutarate and the subsequent addition of the resulting succinic semialdehyde-thiamine pyrophosphate anion to isochorismate to yield 2-succinyl-5-enolpyruvyl-6-hydroxy-3-cyclohexene-1-carboxylate (SEPHCHC). The chain is 2-succinyl-5-enolpyruvyl-6-hydroxy-3-cyclohexene-1-carboxylate synthase from Escherichia coli O45:K1 (strain S88 / ExPEC).